A 422-amino-acid polypeptide reads, in one-letter code: Glucose-1-phosphate adenylyltransferase (422 aa).

Residues Tyr-108, Gly-173, 188-189, and Ser-206 each bind alpha-D-glucose 1-phosphate; that span reads EK.

This sequence belongs to the bacterial/plant glucose-1-phosphate adenylyltransferase family. As to quaternary structure, homotetramer.

It catalyses the reaction alpha-D-glucose 1-phosphate + ATP + H(+) = ADP-alpha-D-glucose + diphosphate. It functions in the pathway glycan biosynthesis; glycogen biosynthesis. Involved in the biosynthesis of ADP-glucose, a building block required for the elongation reactions to produce glycogen. Catalyzes the reaction between ATP and alpha-D-glucose 1-phosphate (G1P) to produce pyrophosphate and ADP-Glc. The chain is Glucose-1-phosphate adenylyltransferase from Paraburkholderia phymatum (strain DSM 17167 / CIP 108236 / LMG 21445 / STM815) (Burkholderia phymatum).